The primary structure comprises 670 residues: Microtubule-associated protein ssm4 (670 aa).

The CAP-Gly domain occupies 23 to 65; it reads GSTDFESGIWLGVELLNGKGKNDGSVKGKRYFSCEKGKGIFVR. Coiled coils occupy residues 209–254 and 404–582; these read KSEL…KNSI and VKTR…KLAD. Ser460 is subject to Phosphoserine. Thr606 bears the Phosphothreonine mark.

The protein localises to the cytoplasm. The protein resides in the cytoskeleton. It localises to the spindle. Its function is as follows. Binds to nuclear microtubules with the effect of either modifying their structure or function. This then promotes meiotic nuclear division. The protein is Microtubule-associated protein ssm4 (ssm4) of Schizosaccharomyces pombe (strain 972 / ATCC 24843) (Fission yeast).